Here is a 609-residue protein sequence, read N- to C-terminus: Glutamine--fructose-6-phosphate aminotransferase [isomerizing] (609 aa).

Cysteine 2 acts as the Nucleophile; for GATase activity in catalysis. Residues 2-218 (CGIVGAIAQR…EGDIAEITRR (217 aa)) form the Glutamine amidotransferase type-2 domain. SIS domains lie at 286-426 (ADEL…LKGL) and 458-599 (LAED…VDQP). The active-site For Fru-6P isomerization activity is the lysine 604.

In terms of assembly, homodimer.

The protein resides in the cytoplasm. It carries out the reaction D-fructose 6-phosphate + L-glutamine = D-glucosamine 6-phosphate + L-glutamate. In terms of biological role, catalyzes the first step in hexosamine metabolism, converting fructose-6P into glucosamine-6P using glutamine as a nitrogen source. The polypeptide is Glutamine--fructose-6-phosphate aminotransferase [isomerizing] (Salmonella typhimurium (strain LT2 / SGSC1412 / ATCC 700720)).